The primary structure comprises 194 residues: Thymidylate kinase (194 aa).

Gly7 to Ser14 lines the ATP pocket.

Belongs to the thymidylate kinase family.

It carries out the reaction dTMP + ATP = dTDP + ADP. Phosphorylation of dTMP to form dTDP in both de novo and salvage pathways of dTTP synthesis. This Nautilia profundicola (strain ATCC BAA-1463 / DSM 18972 / AmH) protein is Thymidylate kinase.